We begin with the raw amino-acid sequence, 318 residues long: MTGRQRTTVVAPDRPVQDATISQLTTRVWTVAIDGYRTIVVEGETGIVAINSFGTPSAQTKYRELITQTFGDKPVVAVVASIDHLDHTGRLGPFANGAEVIGHELGQAIAFGRGLPEQKLADTVVTGPVTEIERAGVRLVLRYPAPTVGTGNLAVDLPDDDVVFMVGLQSGARYGIFPDFHFKHFLRATSEIAALGRRYFVPGRSEVMDAGQVRQALEYVNDFQNACQRCLAGGEVPHWLLEPTTAYLHDELSSKWSHLEGYDPVAVGLGGLRVVCHYYMGGWWLDDTDHHELLYDHLTVRTYREYRERLATAGTGRA.

It belongs to the metallo-beta-lactamase superfamily. As to quaternary structure, part of the complex DnhAB composed of the 2,4-dinitroanisole O-demethylase alpha (DnhA) and beta (DnhB) subunits.

The enzyme catalyses 2,4-dinitroanisole + H2O = 2,4-dinitrophenol + methanol + H(+). Functionally, involved in the degradation of 2,4-dinitroanisole (DNAN), an insensitive munition ingredient used in explosive formulations as a replacement for 2,4,6-trinitrotoluene (TNT). Catalyzes the removal of the methyl group from 2,4-dinitroanisole (DNAN) to yield 2,4-dinitrophenol (2,4-DNP) and methanol. In Nocardioides sp. (strain JS1661), this protein is 2,4-dinitroanisole O-demethylase subunit beta.